A 263-amino-acid chain; its full sequence is Phosphatidylglycerol--prolipoprotein diacylglyceryl transferase (263 aa).

4 helical membrane-spanning segments follow: residues 15 to 35 (ISIHWYAICIVSGLLLAVYLA), 52 to 72 (FILLAFPIAIVGARLYYVIFQ), 83 to 103 (IFAIWNGGIAIYGGLIAGAAV), and 112 to 132 (AIAVLDFLDIAAPGVMIAQSI). Position 134 (Arg-134) interacts with a 1,2-diacyl-sn-glycero-3-phospho-(1'-sn-glycerol). The next 3 helical transmembrane spans lie at 170-190 (VPTFLYESLWNLVGFSIILGL), 200-220 (GDVTSFYLIWYGLGRFVIEGM), and 227-247 (FVGLRVSQWVSISIIILGAVL).

It belongs to the Lgt family.

The protein resides in the cell membrane. The catalysed reaction is L-cysteinyl-[prolipoprotein] + a 1,2-diacyl-sn-glycero-3-phospho-(1'-sn-glycerol) = an S-1,2-diacyl-sn-glyceryl-L-cysteinyl-[prolipoprotein] + sn-glycerol 1-phosphate + H(+). It participates in protein modification; lipoprotein biosynthesis (diacylglyceryl transfer). In terms of biological role, catalyzes the transfer of the diacylglyceryl group from phosphatidylglycerol to the sulfhydryl group of the N-terminal cysteine of a prolipoprotein, the first step in the formation of mature lipoproteins. This is Phosphatidylglycerol--prolipoprotein diacylglyceryl transferase from Streptococcus thermophilus (strain ATCC BAA-491 / LMD-9).